The following is a 973-amino-acid chain: METKVHLFCQAEENIDLLDDGSNSFATDLSSGTINHKKYIKFSKTIEKEISPEIRSLSPEYKKIFETSIIFCGEEKSSDFSGEKKVGRKSLQVQQHSKRTEIIPPFLKLSKEKVTRKENSLCKLPNQYSVHKTSSPLCTSSAITREKEMLSNLYMTLYDEVTHGYLHSKELSALHKACKIFSKIRSGKIYVNDLPVILCILRISISDLEMRQALKTVDIDAFQDALKIFCRIKGGRVSTDDVFAVLDSMGIPINREILEEVTKHTYIDSNHMVDIGDIIFTLNELQEQYEDVSITEGSPLNEITSDRKLSSVAGCYLKYKKKNSLSSKLPEPSISKKLNKKSNQYYSKIMENDDLESKRPKNTWQIRKFLGGVGSSNVGVQEPYSKNGINFKKHSEKGEIHDSKSKPQSLKSSTSLSKSLDKSDISSIPKLQKPAVRKHSSLQKQVSSTEKTAISTLENFCEAISKLQENYIAAEELQSILPSTGINLLDEEFQKIVTDTSRNENGMVELDDFVNALAKERSFPECNALPGVIKAIDKIKDKNVDYEDLNTCLQNFGIYLSKPEFKKITELTEAGETKKVNFKEFIDTMMSNTECFSEKLVLPDAIETLDDLRKETMSVSDLWNTLSSLNSNLKKDEFLAALELVTVDEGDKVQFEEFAKVVRNMRDAARLEELQEVVLAADLLEGDMIAGKNLEDFLRNVGIKSPKEEVEKILQSDFVSEDNMVNIKDCMRALRDTQKFSNYIDFRKEASNLKLPKVNEIKEAANILSHVDNGKIGIPDLEHALKCLNVNLTEEDFNEALNCCNVSDNMEVDLKDFLMKMKESPHFQKSKATQILLATTQILQNDLVDVSDLKTLLMDKDLHTANAILTVMLRHVPEHESGKVSIQEFMTKLSDILTIPKAAGKFYLICTYCPDLERQAVVYMLKTIQDSIVKAQVSKKQYNMNIKQHKISLHNFCLNSKANIAKLNPNSKF.

A disordered region spans residues 384–448 (YSKNGINFKK…HSSLQKQVSS (65 aa)). Residues 396–405 (EKGEIHDSKS) are compositionally biased toward basic and acidic residues. Residues 406-418 (KPQSLKSSTSLSK) are compositionally biased toward low complexity. 6 consecutive EF-hand domains span residues 488–523 (LLDE…ERSF), 524–559 (PECN…FGIY), 633–668 (LKKD…MRDA), 756–791 (PKVN…LNVN), 792–827 (LTEE…SPHF), and 864–899 (TANA…ILTI).

This is EF-hand calcium-binding domain-containing protein 13 (EFCAB13) from Homo sapiens (Human).